The chain runs to 559 residues: Formate--tetrahydrofolate ligase (559 aa).

Residue 68–75 participates in ATP binding; it reads TPAGEGKT.

The protein belongs to the formate--tetrahydrofolate ligase family.

It carries out the reaction (6S)-5,6,7,8-tetrahydrofolate + formate + ATP = (6R)-10-formyltetrahydrofolate + ADP + phosphate. Its pathway is one-carbon metabolism; tetrahydrofolate interconversion. The chain is Formate--tetrahydrofolate ligase from Sinorhizobium fredii (strain NBRC 101917 / NGR234).